A 171-amino-acid chain; its full sequence is Ribosome maturation factor RimP (171 aa).

This sequence belongs to the RimP family.

The protein resides in the cytoplasm. Its function is as follows. Required for maturation of 30S ribosomal subunits. The protein is Ribosome maturation factor RimP of Oleidesulfovibrio alaskensis (strain ATCC BAA-1058 / DSM 17464 / G20) (Desulfovibrio alaskensis).